A 612-amino-acid polypeptide reads, in one-letter code: UvrABC system protein C (612 aa).

The region spanning Thr-20–Ile-98 is the GIY-YIG domain. A UVR domain is found at Ser-208 to Leu-243.

It belongs to the UvrC family. In terms of assembly, interacts with UvrB in an incision complex.

It is found in the cytoplasm. Its function is as follows. The UvrABC repair system catalyzes the recognition and processing of DNA lesions. UvrC both incises the 5' and 3' sides of the lesion. The N-terminal half is responsible for the 3' incision and the C-terminal half is responsible for the 5' incision. The chain is UvrABC system protein C from Francisella tularensis subsp. tularensis (strain WY96-3418).